We begin with the raw amino-acid sequence, 212 residues long: Cytidylate kinase (212 aa).

7–15 serves as a coordination point for ATP; it reads GPAASGKGT.

The protein belongs to the cytidylate kinase family. Type 1 subfamily.

Its subcellular location is the cytoplasm. The catalysed reaction is CMP + ATP = CDP + ADP. The enzyme catalyses dCMP + ATP = dCDP + ADP. The chain is Cytidylate kinase from Rhodopseudomonas palustris (strain HaA2).